The primary structure comprises 967 residues: Muscular LMNA-interacting protein (967 aa).

S129 is modified (phosphoserine). Disordered regions lie at residues 132-154 (EDEA…IATR), 302-336 (GLAS…ASLT), 432-462 (QKVK…HQAS), 506-628 (GSTL…SASH), 644-685 (QTLQ…TPSL), 786-838 (SMHS…SQLT), and 929-967 (FSVR…DSKE). A required for interaction with ISL1 region spans residues 144–811 (PPGGPGNIAT…GSETIKTPTT (668 aa)). Low complexity predominate over residues 437–455 (TPPTSKKSLSSGSLTTGST). Positions 508–523 (TLRSNTTSPQPQTDTF) are enriched in polar residues. Positions 528–541 (VPSVTPVLSPLSSS) are enriched in low complexity. Residues 543–556 (GRKDGDSRTPEKNR) show a composition bias toward basic and acidic residues. Polar residues-rich tracts occupy residues 558 to 567 (ICIQPSTLAS) and 658 to 685 (GSAT…TPSL). S792 bears the Phosphoserine mark. Positions 800–811 (MLGSETIKTPTT) are enriched in polar residues. The segment covering 826 to 835 (SSSSSTASES) has biased composition (low complexity). A compositionally biased stretch (polar residues) spans 938 to 947 (SPTLLSQDTY). The segment covering 958–967 (PEHDTLDSKE) has biased composition (basic and acidic residues).

Directly interacts with LMNA. Interacts with ISL1 (via N-terminal domain); the interaction represses ISL1 transactivator activity. Interactions of ISL1 with MLIP1 and GCN5/KAT2A may be mutually exclusive. Post-translationally, may be ubiquitinated by UBE3C ubiquitin ligase; ubiquitination is followed by protein degradation. In terms of tissue distribution, predominantly expressed in the heart and skeletal muscle, but detected at lower levels in the lung and brain (at protein level). Also detected in smooth muscle, thymus and kidney. In brain, expressed by a subpopulation of cells within the hippocampus and cortex. In heart, expressed by cardiomyocytes. Expression is reduced in hypertrophic hearts at the transcript level. However, expression in hypertrophic hearts induced by transverse aortic constriction do not differ from control at the protein level.

It is found in the nucleus. Its subcellular location is the nucleus envelope. The protein resides in the PML body. The protein localises to the cytoplasm. It localises to the cytosol. It is found in the cell membrane. Its subcellular location is the sarcolemma. Its function is as follows. Required for myoblast differentiation into myotubes, possibly acting as a transcriptional regulator of the myogenic program. Required for cardiac adaptation to stress through integrated regulation of the AKT/mTOR pathways and FOXO1. Regulates cardiac homeostasis and plays a role in the protection against cardiac hypertrophy. Binds chromatin. May act as a transcriptional cofactor for ISL1, repressing its transcriptional activity. May also repress MYOCD transcriptional activity. The protein is Muscular LMNA-interacting protein of Mus musculus (Mouse).